Consider the following 136-residue polypeptide: Flagellar assembly factor FliW 2 (136 aa).

Belongs to the FliW family. As to quaternary structure, interacts with translational regulator CsrA and flagellin(s).

The protein localises to the cytoplasm. Functionally, acts as an anti-CsrA protein, binds CsrA and prevents it from repressing translation of its target genes, one of which is flagellin. Binds to flagellin and participates in the assembly of the flagellum. The chain is Flagellar assembly factor FliW 2 from Wolinella succinogenes (strain ATCC 29543 / DSM 1740 / CCUG 13145 / JCM 31913 / LMG 7466 / NCTC 11488 / FDC 602W) (Vibrio succinogenes).